The following is a 3564-amino-acid chain: CUB and sushi domain-containing protein 1 (3564 aa).

The N-terminal stretch at 1-26 is a signal peptide; sequence MTAWRRFQSLLLLLGLLVLCARLLTA. The Extracellular segment spans residues 27–3487; that stretch reads AKGQNCGGLV…SHYHGTSSGS (3461 aa). Intrachain disulfides connect cysteine 32–cysteine 58, cysteine 145–cysteine 185, cysteine 171–cysteine 202, cysteine 208–cysteine 234, cysteine 349–cysteine 389, cysteine 375–cysteine 406, cysteine 411–cysteine 437, cysteine 527–cysteine 567, cysteine 553–cysteine 580, and cysteine 584–cysteine 610. A CUB 1 domain is found at 32–140; the sequence is CGGLVQGPNG…QGFKALYEVL (109 aa). N-linked (GlcNAc...) asparagine glycosylation is found at asparagine 40 and asparagine 57. One can recognise a Sushi 1 domain in the interval 143–204; that stretch reads HTCGNPGEIL…WDFPAPFCRA (62 aa). The CUB 2 domain occupies 208–312; sequence CGGTLRGTSS…KGFNAQFQVK (105 aa). The region spanning 347 to 408 is the Sushi 2 domain; sequence DMCPDPGIPE…WSDHRPICRA (62 aa). A CUB 3 domain is found at 411–522; it reads CGSNLRGPSG…PGFKAVYQEI (112 aa). The Sushi 3 domain maps to 525–582; sequence GGCGDPGIPAYGKRTGSSFLHGDTLTFECPAAFELVGERVITCQQNNQWSGNKPSCVF. One can recognise a CUB 4 domain in the interval 584–692; the sequence is CFFNFTASSG…RGFNITYTTF (109 aa). Residues asparagine 587 and asparagine 686 are each glycosylated (N-linked (GlcNAc...) asparagine). One can recognise a Sushi 4 domain in the interval 695-756; the sequence is NECHDPGIPI…WSSTVPRCEA (62 aa). Cystine bridges form between cysteine 697–cysteine 738, cysteine 723–cysteine 754, cysteine 758–cysteine 784, cysteine 873–cysteine 913, cysteine 899–cysteine 926, and cysteine 930–cysteine 956. Residues 758–866 enclose the CUB 5 domain; sequence CGGHLTASSG…IGFLIHYESV (109 aa). A Sushi 5 domain is found at 871-928; sequence DSCLDPGIPVNGHRHGGDFGIRSTVTFSCDPGYTLSDDEPLVCERNHQWNHALPSCDA. The region spanning 930 to 1040 is the CUB 6 domain; sequence CGGYIQGKSG…EGFNITFSEY (111 aa). Asparagine 955, asparagine 1015, and asparagine 1034 each carry an N-linked (GlcNAc...) asparagine glycan. Residues 1043–1102 enclose the Sushi 6 domain; that stretch reads EPCDDPGVPAFSRRIGFHFGVGDSLTFSCFLGYRLEGATKLTCLGGGRRVWSAPLPRCVA. Intrachain disulfides connect cysteine 1045–cysteine 1085, cysteine 1071–cysteine 1100, and cysteine 1104–cysteine 1130. One can recognise a CUB 7 domain in the interval 1104-1212; sequence CGASVKGNEG…QGFQLTYTSF (109 aa). N-linked (GlcNAc...) asparagine glycans are attached at residues asparagine 1184 and asparagine 1197. The Sushi 7 domain occupies 1215–1275; sequence VKCEDPGIPN…WDKPLPSCIA (61 aa). Intrachain disulfides connect cysteine 1217-cysteine 1258, cysteine 1244-cysteine 1273, cysteine 1277-cysteine 1304, cysteine 1391-cysteine 1431, cysteine 1417-cysteine 1447, cysteine 1451-cysteine 1477, cysteine 1564-cysteine 1604, cysteine 1590-cysteine 1621, cysteine 1625-cysteine 1651, cysteine 1741-cysteine 1781, cysteine 1767-cysteine 1798, and cysteine 1802-cysteine 1828. The CUB 8 domain maps to 1277 to 1386; the sequence is CGGQIHAATS…SGFSIQFSTS (110 aa). A Sushi 8 domain is found at 1389-1449; sequence ATCNDPGMPQ…WQPDPPTCIA (61 aa). Asparagine 1399 carries N-linked (GlcNAc...) asparagine glycosylation. The region spanning 1451–1559 is the CUB 9 domain; that stretch reads CGGNLTGPAG…SGFAIEFKEK (109 aa). N-linked (GlcNAc...) asparagine glycans are attached at residues asparagine 1454 and asparagine 1572. The Sushi 9 domain maps to 1562–1623; the sequence is EACFDPGNIM…WDQVLPSCNA (62 aa). A CUB 10 domain is found at 1625–1733; that stretch reads CGGQYTGSEG…RGFHFVYQAV (109 aa). Residue asparagine 1644 is glycosylated (N-linked (GlcNAc...) asparagine). The 62-residue stretch at 1739 to 1800 folds into the Sushi 10 domain; that stretch reads TQCSSVPEPR…WNDTIPSCVV (62 aa). 3 N-linked (GlcNAc...) asparagine glycosylation sites follow: asparagine 1792, asparagine 1805, and asparagine 1882. One can recognise a CUB 11 domain in the interval 1802 to 1910; sequence CSGNFTQRRG…AGFHLEYKTV (109 aa). Positions 1913 to 1972 constitute a Sushi 11 domain; the sequence is AACQEPALPSNSIKIGDRYMVNDVLSFQCEPGYTLQGRSHISCMPGTVRRWNYPSPLCIA. 3 disulfide bridges follow: cysteine 1915-cysteine 1955, cysteine 1941-cysteine 1970, and cysteine 1974-cysteine 2000. Residues 1974–2082 enclose the CUB 12 domain; it reads CGGTLSTLGG…QGFKLAYQAY (109 aa). N-linked (GlcNAc...) asparagine glycosylation is present at asparagine 2018. The region spanning 2085–2144 is the Sushi 12 domain; it reads QNCPDPPPFQNGYMINSDYSVGQSVSFECYPGYILIGHPVLTCQHGINRNWNYPFPRCDA. 3 cysteine pairs are disulfide-bonded: cysteine 2087/cysteine 2127, cysteine 2113/cysteine 2142, and cysteine 2146/cysteine 2172. Positions 2146 to 2257 constitute a CUB 13 domain; sequence CGYNVTSQNG…LNFHAFQLKK (112 aa). N-linked (GlcNAc...) asparagine glycans are attached at residues asparagine 2149, asparagine 2154, and asparagine 2187. Residues 2256-2317 form the Sushi 13 domain; sequence KKCQPPPAVP…FEGSLPTCEA (62 aa). Cystine bridges form between cysteine 2258–cysteine 2300, cysteine 2286–cysteine 2315, and cysteine 2319–cysteine 2347. The CUB 14 domain maps to 2319–2430; it reads CPANEVRTGS…KGFKIRYAAP (112 aa). Residues asparagine 2358, asparagine 2394, asparagine 2400, asparagine 2445, asparagine 2470, and asparagine 2503 are each glycosylated (N-linked (GlcNAc...) asparagine). Sushi domains follow at residues 2430–2492, 2493–2554, 2555–2619, 2620–2677, 2678–2735, 2736–2793, 2794–2856, 2857–2914, 2918–2975, 2976–3034, 3035–3094, 3095–3152, 3153–3210, 3214–3272, and 3273–3332; these read PYCS…LCQA, VSCG…TCKP, VACP…SCRV, ISCG…RCLA, GHCG…VCVP, ITCG…TCRV, VNCS…KCLA, ISCG…HCTG, GFCG…VCEA, VSCG…DCTI, ISCG…VCKA, VLCP…QCLP, VFCG…TCID, NTCP…ECIP, and HACR…VCKS. Disulfide bonds link cysteine 2432/cysteine 2473, cysteine 2459/cysteine 2490, cysteine 2495/cysteine 2537, cysteine 2521/cysteine 2552, cysteine 2557/cysteine 2602, cysteine 2588/cysteine 2617, cysteine 2622/cysteine 2662, cysteine 2648/cysteine 2675, cysteine 2680/cysteine 2720, cysteine 2706/cysteine 2733, cysteine 2738/cysteine 2778, and cysteine 2764/cysteine 2791. Asparagine 2605 carries an N-linked (GlcNAc...) asparagine glycan. N-linked (GlcNAc...) asparagine glycosylation is found at asparagine 2750 and asparagine 2761. N-linked (GlcNAc...) asparagine glycosylation is present at asparagine 2795. Cystine bridges form between cysteine 2796-cysteine 2841, cysteine 2827-cysteine 2854, cysteine 2859-cysteine 2899, cysteine 2885-cysteine 2912, cysteine 2920-cysteine 2960, cysteine 2946-cysteine 2973, cysteine 2978-cysteine 3019, cysteine 3005-cysteine 3032, cysteine 3037-cysteine 3079, cysteine 3063-cysteine 3092, cysteine 3097-cysteine 3137, cysteine 3123-cysteine 3150, cysteine 3155-cysteine 3195, cysteine 3181-cysteine 3208, cysteine 3216-cysteine 3257, cysteine 3243-cysteine 3270, cysteine 3275-cysteine 3317, and cysteine 3302-cysteine 3330. N-linked (GlcNAc...) asparagine glycosylation is present at asparagine 2894. A glycan (N-linked (GlcNAc...) asparagine) is linked at asparagine 2963. N-linked (GlcNAc...) asparagine glycosylation is found at asparagine 3022 and asparagine 3056. The N-linked (GlcNAc...) asparagine glycan is linked to asparagine 3105. Residues asparagine 3228 and asparagine 3260 are each glycosylated (N-linked (GlcNAc...) asparagine). Residues asparagine 3339, asparagine 3379, and asparagine 3386 are each glycosylated (N-linked (GlcNAc...) asparagine). The chain crosses the membrane as a helical span at residues 3488 to 3508; it reads VAAAILVPFFALILSGFAFYL. The Cytoplasmic segment spans residues 3509 to 3564; the sequence is YKHRTRPKVQYNGYAGHENSNGQASFENPMYDTNLKPTEAKAVRFDTTLNTVCTVV.

Belongs to the CSMD family. In terms of tissue distribution, weakly expressed in most tissues, except in brain. Expressed at intermediate level in brain, including cerebellum, substantia nigra, hippocampus and fetal brain.

It localises to the membrane. Potential suppressor of squamous cell carcinomas. In Homo sapiens (Human), this protein is CUB and sushi domain-containing protein 1 (CSMD1).